A 352-amino-acid chain; its full sequence is B1 bradykinin receptor (352 aa).

Residues 1-41 are Extracellular-facing; the sequence is MASWPPLQLQSSNQSQLFPQNATACDNAPEAWDLLHRVLPT. N-linked (GlcNAc...) asparagine glycosylation is found at Asn-13 and Asn-21. Residues 42–62 traverse the membrane as a helical segment; it reads FIISICSFGLLGNLFVLLVFL. The Cytoplasmic portion of the chain corresponds to 63–72; that stretch reads LPRRRLNVAE. A helical transmembrane segment spans residues 73 to 93; that stretch reads IYLANLAASDLVFVLGLPFWA. The Extracellular segment spans residues 94 to 110; sequence ENIWNQFNWPFGALLCR. The cysteines at positions 109 and 188 are disulfide-linked. A helical transmembrane segment spans residues 111 to 131; that stretch reads VINGIIKANLFISIFLVVAIS. The Cytoplasmic segment spans residues 132–153; it reads QDRYCVLVHPMASRRRQRRRQA. A helical transmembrane segment spans residues 154–174; the sequence is RVTCVLIWVVGGLLSIPTFLL. Topologically, residues 175–206 are extracellular; sequence RSIQAVPDLNITACILLLPHEAWHFARIVELN. Asn-184 carries N-linked (GlcNAc...) asparagine glycosylation. A helical membrane pass occupies residues 207 to 227; the sequence is ILAFLLPLAAIIFFNYHILAS. The Cytoplasmic portion of the chain corresponds to 228 to 250; that stretch reads LRGREEVSRTRCGGSKDSKTTAL. Residues 251–271 form a helical membrane-spanning segment; sequence ILTLVVAFLVCWAPYHFFAFL. Topologically, residues 272-294 are extracellular; it reads EFLFQVQAVRGCFWEDFIDLGLQ. The chain crosses the membrane as a helical span at residues 295–315; it reads LANFLAFTNSSLNPVIYVFAG. The Cytoplasmic portion of the chain corresponds to 316-352; that stretch reads RLFRTKVWELYKQCTPKSLAPISSSHRKEIFQLFWRN. The S-palmitoyl cysteine moiety is linked to residue Cys-329.

The protein belongs to the G-protein coupled receptor 1 family. Bradykinin receptor subfamily. BDKRB1 sub-subfamily.

It is found in the cell membrane. Functionally, this is a receptor for bradykinin. Could be a factor in chronic pain and inflammation. The sequence is that of B1 bradykinin receptor (BDKRB1) from Macaca fascicularis (Crab-eating macaque).